The chain runs to 225 residues: CRISPR pre-crRNA endoribonuclease Cas5d (225 aa).

Belongs to the CRISPR-associated protein Cas5 family. Subtype I-C/Dvulg subfamily. Does not require a metal cofactor. is required as a cofactor.

In terms of biological role, CRISPR (clustered regularly interspaced short palindromic repeat) is an adaptive immune system that provides protection against mobile genetic elements (viruses, transposable elements and conjugative plasmids). CRISPR clusters contain spacers, sequences complementary to antecedent mobile elements, and target invading nucleic acids. CRISPR clusters are transcribed and processed into CRISPR RNA (crRNA). This protein is a sequence-specific endonuclease that cleaves pre-crRNA at G21 into mature crRNA. Does not cleave pre-crRNA associated with the T.thermophilus strain HB27 Cas5 protein (AC Q746C2) CRISPR locus. The reaction mechanism may proceed by an intramolecular attack of the 2'-hydroxyl group of G21 on the scissile phosphodiester, cutting the precursor 3' to G21 residue yielding 5'-hydroxyl and 2' and/or 3' ends lacking a hydroxyl group (perhaps a 2'/3' cyclic phosphodiester). This Mannheimia succiniciproducens (strain KCTC 0769BP / MBEL55E) protein is CRISPR pre-crRNA endoribonuclease Cas5d.